The primary structure comprises 151 residues: Small ribosomal subunit protein uS11 (151 aa).

The residue at position 16 (Ser-16) is a Phosphoserine. Residues Lys-61, Lys-63, and Lys-106 each participate in a glycyl lysine isopeptide (Lys-Gly) (interchain with G-Cter in SUMO2) cross-link. The segment at 131-151 (DVTPIPSDSTRRKGGRRGRRL) is disordered. Residue Thr-133 is modified to Phosphothreonine. At Ser-139 the chain carries Phosphoserine. Over residues 142 to 151 (RKGGRRGRRL) the composition is skewed to basic residues.

It belongs to the universal ribosomal protein uS11 family. As to quaternary structure, component of the small ribosomal subunit. Part of the small subunit (SSU) processome, composed of more than 70 proteins and the RNA chaperone small nucleolar RNA (snoRNA) U3.

The protein resides in the cytoplasm. It localises to the nucleus. It is found in the nucleolus. Its function is as follows. Component of the small ribosomal subunit. The ribosome is a large ribonucleoprotein complex responsible for the synthesis of proteins in the cell. Part of the small subunit (SSU) processome, first precursor of the small eukaryotic ribosomal subunit. During the assembly of the SSU processome in the nucleolus, many ribosome biogenesis factors, an RNA chaperone and ribosomal proteins associate with the nascent pre-rRNA and work in concert to generate RNA folding, modifications, rearrangements and cleavage as well as targeted degradation of pre-ribosomal RNA by the RNA exosome. This is Small ribosomal subunit protein uS11 (Rps14) from Mus musculus (Mouse).